The primary structure comprises 322 residues: Undecaprenyl-phosphate 4-deoxy-4-formamido-L-arabinose transferase (322 aa).

Residues 1 to 235 are Cytoplasmic-facing; it reads MFEIHPVKKV…TCLTTTPLRM (235 aa). A helical membrane pass occupies residues 236–256; that stretch reads LSLLGSIIAIGGFSIAVLLVI. Residues 257–269 are Periplasmic-facing; that stretch reads LRLTFGPQWAAEG. The chain crosses the membrane as a helical span at residues 270–290; the sequence is VFMLFAVLFTFIGAQFIGMGL. Residues 291-322 lie on the Cytoplasmic side of the membrane; it reads LGEYIGRIYTDVRARPRYFVQQVIRPSSKENE.

Belongs to the glycosyltransferase 2 family.

The protein localises to the cell inner membrane. It carries out the reaction UDP-4-deoxy-4-formamido-beta-L-arabinose + di-trans,octa-cis-undecaprenyl phosphate = 4-deoxy-4-formamido-alpha-L-arabinopyranosyl di-trans,octa-cis-undecaprenyl phosphate + UDP. Its pathway is glycolipid biosynthesis; 4-amino-4-deoxy-alpha-L-arabinose undecaprenyl phosphate biosynthesis; 4-amino-4-deoxy-alpha-L-arabinose undecaprenyl phosphate from UDP-4-deoxy-4-formamido-beta-L-arabinose and undecaprenyl phosphate: step 1/2. The protein operates within bacterial outer membrane biogenesis; lipopolysaccharide biosynthesis. Catalyzes the transfer of 4-deoxy-4-formamido-L-arabinose from UDP to undecaprenyl phosphate. The modified arabinose is attached to lipid A and is required for resistance to polymyxin and cationic antimicrobial peptides. The chain is Undecaprenyl-phosphate 4-deoxy-4-formamido-L-arabinose transferase from Shigella flexneri serotype 5b (strain 8401).